A 2179-amino-acid chain; its full sequence is Axotactin (2179 aa).

The first 18 residues, 1 to 18 (MAFPYIWALLPLICSASG), serve as a signal peptide directing secretion. At 19 to 1816 (LSLPNMTSTD…DENKQEDSTQ (1798 aa)) the chain is on the extracellular side. Residues Asn23 and Asn52 are each glycosylated (N-linked (GlcNAc...) asparagine). Residues 59–107 (GGLAGSSTGGQSLPDTGGGNSAGGSPAGGSSGTGGGGSNSGISGNNSAM) form a disordered region. Residues 74–97 (TGGGNSAGGSPAGGSSGTGGGGSN) show a composition bias toward gly residues. Asn103 carries an N-linked (GlcNAc...) asparagine glycan. Residues 119-170 (CAGPGDPGPCKQYIYKWRYEPTTNECTNFIWGGCEGNPQNRFGTEAECLFHC) enclose the BPTI/Kunitz inhibitor domain. Cystine bridges form between Cys119-Cys170, Cys128-Cys152, and Cys144-Cys166. The segment at 201 to 220 (YTQSPAQSPDGMGGAEGGDG) is disordered. The span at 211–220 (GMGGAEGGDG) shows a compositional bias: gly residues. The Laminin G-like 1 domain maps to 242-438 (KTFIFAKNNT…TKHENVNEGC (197 aa)). Asn249 is a glycosylation site (N-linked (GlcNAc...) asparagine). Disulfide bonds link Cys405–Cys438, Cys442–Cys455, Cys449–Cys464, and Cys466–Cys476. One can recognise an EGF-like 1 domain in the interval 439–477 (SDMCESRHNLCFVGSRCINHYGGISCDCFGTHYEGEHCD). 2 Laminin G-like domains span residues 481-664 (ATII…AEFV) and 660-839 (EAEF…LDNC). Residues Asn542, Asn571, and Asn741 are each glycosylated (N-linked (GlcNAc...) asparagine). 4 cysteine pairs are disulfide-bonded: Cys808–Cys839, Cys845–Cys857, Cys851–Cys866, and Cys868–Cys878. The EGF-like 2 domain maps to 841 to 879 (YIDPCKRPNTCEHGGKCFVKDDRVTCDCKHTGYIGKNCH). N-linked (GlcNAc...) asparagine glycosylation is found at Asn925, Asn1000, Asn1019, and Asn1026. Residues 1087–1259 (YVVTFTTSQS…VHLSEIIKDC (173 aa)) enclose the Laminin G-like 4 domain. Intrachain disulfides connect Cys1231/Cys1259, Cys1263/Cys1274, Cys1268/Cys1283, and Cys1285/Cys1296. One can recognise an EGF-like 3 domain in the interval 1260-1297 (KPSCVPSPCRNGAQCKELWSSFKCVCNNPWAHIGEFCE). The 211-residue stretch at 1316 to 1526 (RNYLSVGATP…PTQEGVLPNC (211 aa)) folds into the Laminin G-like 5 domain. Asn1393 carries an N-linked (GlcNAc...) asparagine glycan. 4 disulfides stabilise this stretch: Cys1494/Cys1526, Cys1530/Cys1541, Cys1535/Cys1552, and Cys1554/Cys1564. The region spanning 1527–1565 (QIKCDAEPCKNGGTCQEHFAEQLSTCDCEHTSFLGEFCS) is the EGF-like 4 domain. The 197-residue stretch at 1569–1765 (GADFSGESTL…NPQGVRSAQC (197 aa)) folds into the Laminin G-like 6 domain. N-linked (GlcNAc...) asparagine glycans are attached at residues Asn1667, Asn1707, Asn1751, and Asn1782. Cys1722 and Cys1765 are disulfide-bonded. A helical membrane pass occupies residues 1817–1837 (VVFLTLTSVFVIIVICCLLEV). The Cytoplasmic portion of the chain corresponds to 1838 to 2179 (YRSHLAYKKR…TSIDSILSLD (342 aa)). Disordered regions lie at residues 1891 to 2141 (YTYK…PTLF) and 2156 to 2179 (SYLGGPRLQPRSNRTSIDSILSLD). A compositionally biased stretch (polar residues) spans 1916 to 1930 (GSATPSQPGTPTALS). The span at 1940–1949 (EEEEEEEDEA) shows a compositional bias: acidic residues. Residues 1954-1966 (AAEKSGENEEPPA) are compositionally biased toward basic and acidic residues. Polar residues-rich tracts occupy residues 1969 to 1981 (TTASEIKESQAQP) and 2010 to 2025 (EPSSQLNSAQNGQLAQ). A compositionally biased stretch (basic and acidic residues) spans 2064 to 2079 (PQEHKSRHKATDDTEA). The segment covering 2082 to 2091 (QQQQQQQQQQ) has biased composition (low complexity). Composition is skewed to polar residues over residues 2092-2105 (SFDVATNANGSSLP) and 2165-2179 (PRSNRTSIDSILSLD).

The protein resides in the cell projection. It localises to the axon. The protein localises to the membrane. Its function is as follows. May have serine protease inhibitor activity. Might play a role in the glial-neuronal signaling pathway that is important in establishing the electrical properties of axonal membranes. The sequence is that of Axotactin from Drosophila melanogaster (Fruit fly).